We begin with the raw amino-acid sequence, 171 residues long: Protein BTG1 (171 aa).

Ser159 is modified (phosphoserine).

This sequence belongs to the BTG family. In terms of assembly, interacts with CNOT7 and CNOT8.

Anti-proliferative protein. The polypeptide is Protein BTG1 (BTG1) (Bos taurus (Bovine)).